The following is a 427-amino-acid chain: 3-phosphoshikimate 1-carboxyvinyltransferase (427 aa).

Positions 23, 24, and 28 each coordinate 3-phosphoshikimate. Phosphoenolpyruvate is bound at residue K23. The phosphoenolpyruvate site is built by G97 and R125. The 3-phosphoshikimate site is built by S170, S171, Q172, S198, D314, N337, and K341. Q172 is a binding site for phosphoenolpyruvate. The active-site Proton acceptor is the D314. Phosphoenolpyruvate is bound by residues R345, R387, and K412.

The protein belongs to the EPSP synthase family. As to quaternary structure, monomer.

It localises to the cytoplasm. It catalyses the reaction 3-phosphoshikimate + phosphoenolpyruvate = 5-O-(1-carboxyvinyl)-3-phosphoshikimate + phosphate. Its pathway is metabolic intermediate biosynthesis; chorismate biosynthesis; chorismate from D-erythrose 4-phosphate and phosphoenolpyruvate: step 6/7. Catalyzes the transfer of the enolpyruvyl moiety of phosphoenolpyruvate (PEP) to the 5-hydroxyl of shikimate-3-phosphate (S3P) to produce enolpyruvyl shikimate-3-phosphate and inorganic phosphate. The polypeptide is 3-phosphoshikimate 1-carboxyvinyltransferase (Buchnera aphidicola subsp. Acyrthosiphon pisum (strain 5A)).